We begin with the raw amino-acid sequence, 327 residues long: Ribonucleoside-diphosphate reductase small chain (327 aa).

Asp70, Glu101, and His104 together coordinate Fe cation. Tyr108 is an active-site residue. Residues Glu164, Glu198, and His201 each coordinate Fe cation.

The protein belongs to the ribonucleoside diphosphate reductase small chain family. In terms of assembly, heterotetramer composed of a homodimer of the large subunit (R1) and a homodimer of the small subunit (R2). Larger multisubunit protein complex are also active, composed of (R1)n(R2)n. It depends on Fe cation as a cofactor.

It carries out the reaction a 2'-deoxyribonucleoside 5'-diphosphate + [thioredoxin]-disulfide + H2O = a ribonucleoside 5'-diphosphate + [thioredoxin]-dithiol. Ribonucleoside-diphosphate reductase holoenzyme provides the precursors necessary for viral DNA synthesis. Allows virus growth in non-dividing cells. Catalyzes the biosynthesis of deoxyribonucleotides from the corresponding ribonucleotides. In African swine fever virus (isolate Tick/South Africa/Pretoriuskop Pr4/1996) (ASFV), this protein is Ribonucleoside-diphosphate reductase small chain.